The sequence spans 160 residues: 6,7-dimethyl-8-ribityllumazine synthase (160 aa).

Residues Trp28, 59 to 61, and 82 to 84 each bind 5-amino-6-(D-ribitylamino)uracil; these read SFE and VII. 87-88 is a (2S)-2-hydroxy-3-oxobutyl phosphate binding site; it reads GT. Residue His90 is the Proton donor of the active site. Phe115 serves as a coordination point for 5-amino-6-(D-ribitylamino)uracil. Residue Arg129 participates in (2S)-2-hydroxy-3-oxobutyl phosphate binding.

The protein belongs to the DMRL synthase family.

The catalysed reaction is (2S)-2-hydroxy-3-oxobutyl phosphate + 5-amino-6-(D-ribitylamino)uracil = 6,7-dimethyl-8-(1-D-ribityl)lumazine + phosphate + 2 H2O + H(+). The protein operates within cofactor biosynthesis; riboflavin biosynthesis; riboflavin from 2-hydroxy-3-oxobutyl phosphate and 5-amino-6-(D-ribitylamino)uracil: step 1/2. Functionally, catalyzes the formation of 6,7-dimethyl-8-ribityllumazine by condensation of 5-amino-6-(D-ribitylamino)uracil with 3,4-dihydroxy-2-butanone 4-phosphate. This is the penultimate step in the biosynthesis of riboflavin. The sequence is that of 6,7-dimethyl-8-ribityllumazine synthase from Clavibacter sepedonicus (Clavibacter michiganensis subsp. sepedonicus).